A 496-amino-acid polypeptide reads, in one-letter code: Lysine--tRNA ligase (496 aa).

Mg(2+) is bound by residues E407 and E414.

Belongs to the class-II aminoacyl-tRNA synthetase family. In terms of assembly, homodimer. Mg(2+) is required as a cofactor.

It is found in the cytoplasm. The catalysed reaction is tRNA(Lys) + L-lysine + ATP = L-lysyl-tRNA(Lys) + AMP + diphosphate. This is Lysine--tRNA ligase from Staphylococcus haemolyticus (strain JCSC1435).